Reading from the N-terminus, the 464-residue chain is Macrophage metalloelastase (464 aa).

The N-terminal stretch at 1-17 (MKFLLLILTLWVTSSGA) is a signal peptide. A propeptide spans 18 to 100 (DPLKENDMLF…DVYHFKTMPG (83 aa)) (activation peptide). An N-linked (GlcNAc...) asparagine glycan is attached at Asn-69. The Cysteine switch motif lies at 85-92 (PRCGVPDV). Residue Cys-87 coordinates Zn(2+). 2 residues coordinate Ca(2+): Asp-119 and Asp-153. His-163 and Asp-165 together coordinate Zn(2+). Asp-170, Gly-171, Gly-173, and Val-175 together coordinate Ca(2+). Zn(2+) is bound at residue His-178. Ca(2+) is bound by residues Gly-185, Gly-187, and Asp-189. His-191 lines the Zn(2+) pocket. Positions 193, 194, and 196 each coordinate Ca(2+). His-213 contacts Zn(2+). Residue Glu-214 is part of the active site. His-217 and His-223 together coordinate Zn(2+). 4 Hemopexin repeats span residues 274–323 (PTAC…WPTL), 324–370 (PSGI…GFPD), 372–420 (VKKI…FPGI), and 421–464 (GPKI…WFDC). Cys-277 and Cys-464 form a disulfide bridge. Ca(2+) contacts are provided by Asp-284, Glu-328, Asp-376, and Asp-425.

It belongs to the peptidase M10A family. The cofactor is Ca(2+). Zn(2+) serves as cofactor.

Its subcellular location is the secreted. It is found in the extracellular space. The protein resides in the extracellular matrix. It catalyses the reaction Hydrolysis of soluble and insoluble elastin. Specific cleavages are also produced at 14-Ala-|-Leu-15 and 16-Tyr-|-Leu-17 in the B chain of insulin.. Functionally, may be involved in tissue injury and remodeling. Has significant elastolytic activity. Can accept large and small amino acids at the P1' site, but has a preference for leucine. Aromatic or hydrophobic residues are preferred at the P1 site, with small hydrophobic residues (preferably alanine) occupying P3. This is Macrophage metalloelastase (MMP12) from Oryctolagus cuniculus (Rabbit).